Reading from the N-terminus, the 141-residue chain is Small ribosomal subunit protein bS6 (141 aa).

Positions 96–141 are disordered; that stretch reads VTGQSEMLKAEENRSERRERRERPEHADSAEGDDSNDSDSSDNADE. Residues 103–124 show a composition bias toward basic and acidic residues; it reads LKAEENRSERRERRERPEHADS. Acidic residues predominate over residues 125 to 141; the sequence is AEGDDSNDSDSSDNADE.

The protein belongs to the bacterial ribosomal protein bS6 family.

Binds together with bS18 to 16S ribosomal RNA. The sequence is that of Small ribosomal subunit protein bS6 from Pseudomonas putida (strain ATCC 700007 / DSM 6899 / JCM 31910 / BCRC 17059 / LMG 24140 / F1).